We begin with the raw amino-acid sequence, 312 residues long: Probable myosin light chain kinase DDB_G0282429 (312 aa).

Residues 1–28 (MDRMDSSDEEIDNISDDELQSGDEIEVE) are disordered. The segment covering 7-27 (SDEEIDNISDDELQSGDEIEV) has biased composition (acidic residues). Residues 38–290 (YILGNEIGRG…FEQCLIHPWV (253 aa)) enclose the Protein kinase domain. Residues 44 to 52 (IGRGAFSIV) and lysine 67 each bind ATP. Aspartate 158 acts as the Proton acceptor in catalysis.

This sequence belongs to the protein kinase superfamily. CAMK Ser/Thr protein kinase family. CaMK subfamily.

The catalysed reaction is L-seryl-[myosin light chain] + ATP = O-phospho-L-seryl-[myosin light chain] + ADP + H(+). The enzyme catalyses L-threonyl-[myosin light chain] + ATP = O-phospho-L-threonyl-[myosin light chain] + ADP + H(+). Its activity is regulated as follows. Does not have a calmodulin-binding domain. Its function is as follows. May phosphorylate a specific serine in the N-terminus of a myosin light chain. The polypeptide is Probable myosin light chain kinase DDB_G0282429 (Dictyostelium discoideum (Social amoeba)).